Reading from the N-terminus, the 537-residue chain is Phenylalanine--tRNA ligase beta subunit (537 aa).

One can recognise a B5 domain in the interval 268 to 343 (FNFRPYRLNL…KSYGIENVRE (76 aa)). 4 residues coordinate Mg(2+): D321, D327, E330, and D331.

Belongs to the phenylalanyl-tRNA synthetase beta subunit family. Type 2 subfamily. In terms of assembly, tetramer of two alpha and two beta subunits. It depends on Mg(2+) as a cofactor.

The protein localises to the cytoplasm. It carries out the reaction tRNA(Phe) + L-phenylalanine + ATP = L-phenylalanyl-tRNA(Phe) + AMP + diphosphate + H(+). The polypeptide is Phenylalanine--tRNA ligase beta subunit (Thermoplasma volcanium (strain ATCC 51530 / DSM 4299 / JCM 9571 / NBRC 15438 / GSS1)).